Consider the following 333-residue polypeptide: Pantothenate synthetase (333 aa).

27–34 (MGALHEGH) serves as a coordination point for ATP. Histidine 34 functions as the Proton donor in the catalytic mechanism. Glutamine 61 provides a ligand contact to (R)-pantoate. Glutamine 61 contributes to the beta-alanine binding site. An ATP-binding site is contributed by 148 to 151 (GQKD). Glutamine 154 lines the (R)-pantoate pocket. Residues valine 177 and 185-188 (LSSR) contribute to the ATP site.

This sequence belongs to the pantothenate synthetase family. In terms of assembly, homodimer.

It is found in the cytoplasm. It carries out the reaction (R)-pantoate + beta-alanine + ATP = (R)-pantothenate + AMP + diphosphate + H(+). It participates in cofactor biosynthesis; (R)-pantothenate biosynthesis; (R)-pantothenate from (R)-pantoate and beta-alanine: step 1/1. Functionally, catalyzes the condensation of pantoate with beta-alanine in an ATP-dependent reaction via a pantoyl-adenylate intermediate. The protein is Pantothenate synthetase of Streptomyces avermitilis (strain ATCC 31267 / DSM 46492 / JCM 5070 / NBRC 14893 / NCIMB 12804 / NRRL 8165 / MA-4680).